A 122-amino-acid chain; its full sequence is Double-headed protease inhibitor, submandibular gland (122 aa).

Kazal-like domains are found at residues 10–70 and 71–121; these read GGRK…KCDI and ECPQ…QCQS. Intrachain disulfides connect cysteine 16/cysteine 50, cysteine 28/cysteine 47, cysteine 36/cysteine 68, cysteine 72/cysteine 101, cysteine 79/cysteine 98, and cysteine 87/cysteine 119.

It is found in the secreted. In terms of biological role, this inhibitor is composed of two homologous actively inhibiting halves: one which inhibits trypsin, the other which inhibits elastase. The chain is Double-headed protease inhibitor, submandibular gland from Mustela lutreola (European mink).